The following is a 199-amino-acid chain: Holliday junction branch migration complex subunit RuvA (199 aa).

The domain I stretch occupies residues 1 to 63 (MIAYIEGKLA…EDAHTLFGFA (63 aa)). The interval 64 to 142 (DLMEKEMFLH…KDALLAGSDS (79 aa)) is domain II. Residues 143 to 151 (KQNFSVSHN) form a flexible linker region. The domain III stretch occupies residues 151–199 (NSIRSEALTALITLGFTKTVAEKNLDLILKGNSNSFTLEDLIKQALKMS).

This sequence belongs to the RuvA family. In terms of assembly, homotetramer. Forms an RuvA(8)-RuvB(12)-Holliday junction (HJ) complex. HJ DNA is sandwiched between 2 RuvA tetramers; dsDNA enters through RuvA and exits via RuvB. An RuvB hexamer assembles on each DNA strand where it exits the tetramer. Each RuvB hexamer is contacted by two RuvA subunits (via domain III) on 2 adjacent RuvB subunits; this complex drives branch migration. In the full resolvosome a probable DNA-RuvA(4)-RuvB(12)-RuvC(2) complex forms which resolves the HJ.

It is found in the cytoplasm. The RuvA-RuvB-RuvC complex processes Holliday junction (HJ) DNA during genetic recombination and DNA repair, while the RuvA-RuvB complex plays an important role in the rescue of blocked DNA replication forks via replication fork reversal (RFR). RuvA specifically binds to HJ cruciform DNA, conferring on it an open structure. The RuvB hexamer acts as an ATP-dependent pump, pulling dsDNA into and through the RuvAB complex. HJ branch migration allows RuvC to scan DNA until it finds its consensus sequence, where it cleaves and resolves the cruciform DNA. The protein is Holliday junction branch migration complex subunit RuvA of Cytophaga hutchinsonii (strain ATCC 33406 / DSM 1761 / CIP 103989 / NBRC 15051 / NCIMB 9469 / D465).